An 85-amino-acid chain; its full sequence is MSLLDYFRSNKKASSASLAKERLQIIVAHQRTERGAPDYFPQMKQEIIEVIRKYVYISEEQVSVQLEQNDDNLSVLELNVTLPER.

It belongs to the MinE family.

Functionally, prevents the cell division inhibition by proteins MinC and MinD at internal division sites while permitting inhibition at polar sites. This ensures cell division at the proper site by restricting the formation of a division septum at the midpoint of the long axis of the cell. This Shewanella amazonensis (strain ATCC BAA-1098 / SB2B) protein is Cell division topological specificity factor.